The following is a 402-amino-acid chain: mRNA cap guanine-N(7) methyltransferase (402 aa).

Over residues 1 to 11 (MDHVLNPEEKV) the composition is skewed to basic and acidic residues. The disordered stretch occupies residues 1–75 (MDHVLNPEEK…PRLEEGHGSL (75 aa)). Polar residues predominate over residues 35–50 (PKLSASEKSLPGNTKS). Positions 55–72 (KAAEPDSPPKRPRLEEGH) are enriched in basic and acidic residues. The region spanning 94-401 (SRIFHLRNFN…IYLLFAFEKQ (308 aa)) is the mRNA cap 0 methyltransferase domain. 103-104 (NN) contributes to the mRNA binding site. The S-adenosyl-L-methionine site is built by lysine 107, glycine 131, aspartate 153, aspartate 187, glutamine 210, and tyrosine 215.

It belongs to the class I-like SAM-binding methyltransferase superfamily. mRNA cap 0 methyltransferase family.

Its subcellular location is the nucleus. The enzyme catalyses a 5'-end (5'-triphosphoguanosine)-ribonucleoside in mRNA + S-adenosyl-L-methionine = a 5'-end (N(7)-methyl 5'-triphosphoguanosine)-ribonucleoside in mRNA + S-adenosyl-L-homocysteine. In terms of biological role, catalytic subunit of the mRNA-capping methyltransferase RNMT:RAMAC complex that methylates the N7 position of the added guanosine to the 5'-cap structure of mRNAs. Binds RNA containing 5'-terminal GpppC. This Xenopus laevis (African clawed frog) protein is mRNA cap guanine-N(7) methyltransferase (rnmt).